A 334-amino-acid polypeptide reads, in one-letter code: Holliday junction branch migration complex subunit RuvB (334 aa).

Residues 4–184 (ADRLIAADAQ…FGIVQRLEFY (181 aa)) form a large ATPase domain (RuvB-L) region. Residues Ile23, Arg24, Gly65, Lys68, Thr69, Thr70, 131–133 (EDY), Arg174, Tyr184, and Arg221 contribute to the ATP site. Position 69 (Thr69) interacts with Mg(2+). Residues 185–255 (QVADLQHIVG…VAAQALNMLD (71 aa)) are small ATPAse domain (RuvB-S). The interval 258-334 (AAGFDYMDRK…YQHFGIDRAE (77 aa)) is head domain (RuvB-H). Positions 294, 313, and 318 each coordinate DNA.

It belongs to the RuvB family. As to quaternary structure, homohexamer. Forms an RuvA(8)-RuvB(12)-Holliday junction (HJ) complex. HJ DNA is sandwiched between 2 RuvA tetramers; dsDNA enters through RuvA and exits via RuvB. An RuvB hexamer assembles on each DNA strand where it exits the tetramer. Each RuvB hexamer is contacted by two RuvA subunits (via domain III) on 2 adjacent RuvB subunits; this complex drives branch migration. In the full resolvosome a probable DNA-RuvA(4)-RuvB(12)-RuvC(2) complex forms which resolves the HJ.

It localises to the cytoplasm. It catalyses the reaction ATP + H2O = ADP + phosphate + H(+). In terms of biological role, the RuvA-RuvB-RuvC complex processes Holliday junction (HJ) DNA during genetic recombination and DNA repair, while the RuvA-RuvB complex plays an important role in the rescue of blocked DNA replication forks via replication fork reversal (RFR). RuvA specifically binds to HJ cruciform DNA, conferring on it an open structure. The RuvB hexamer acts as an ATP-dependent pump, pulling dsDNA into and through the RuvAB complex. RuvB forms 2 homohexamers on either side of HJ DNA bound by 1 or 2 RuvA tetramers; 4 subunits per hexamer contact DNA at a time. Coordinated motions by a converter formed by DNA-disengaged RuvB subunits stimulates ATP hydrolysis and nucleotide exchange. Immobilization of the converter enables RuvB to convert the ATP-contained energy into a lever motion, pulling 2 nucleotides of DNA out of the RuvA tetramer per ATP hydrolyzed, thus driving DNA branch migration. The RuvB motors rotate together with the DNA substrate, which together with the progressing nucleotide cycle form the mechanistic basis for DNA recombination by continuous HJ branch migration. Branch migration allows RuvC to scan DNA until it finds its consensus sequence, where it cleaves and resolves cruciform DNA. The sequence is that of Holliday junction branch migration complex subunit RuvB from Edwardsiella ictaluri (strain 93-146).